Here is a 168-residue protein sequence, read N- to C-terminus: Thiol peroxidase (168 aa).

One can recognise a Thioredoxin domain in the interval 19–168; that stretch reads PQAGSKAQAF…YDAALNVLKA (150 aa). The active-site Cysteine sulfenic acid (-SOH) intermediate is the Cys-61. A disulfide bond links Cys-61 and Cys-95.

It belongs to the peroxiredoxin family. Tpx subfamily. Homodimer.

It catalyses the reaction a hydroperoxide + [thioredoxin]-dithiol = an alcohol + [thioredoxin]-disulfide + H2O. In terms of biological role, thiol-specific peroxidase that catalyzes the reduction of hydrogen peroxide and organic hydroperoxides to water and alcohols, respectively. Plays a role in cell protection against oxidative stress by detoxifying peroxides. This chain is Thiol peroxidase, found in Salmonella typhi.